The following is a 914-amino-acid chain: DNA mismatch repair protein MutS (914 aa).

Residues 28–74 form a disordered region; the sequence is NTNSVKDSNLNDEELSKNAELRPRKRKKSVLLQNSVGEQTEDFSNDE. Residue 726–733 participates in ATP binding; it reads GPNASGKS.

This sequence belongs to the DNA mismatch repair MutS family.

Functionally, this protein is involved in the repair of mismatches in DNA. It is possible that it carries out the mismatch recognition step. This protein has a weak ATPase activity. This chain is DNA mismatch repair protein MutS, found in Prochlorococcus marinus (strain SARG / CCMP1375 / SS120).